The sequence spans 200 residues: MSKCAGIVLAGGMSSRFGEPKALVGWKESTFIEHIVKVMESAVQEIVVISHTDIKERVEQLVQVPVIEDMSHYKGNGPLAGIVSGMEYIDSDWYIIMPCDAPNVSNEWITILLEQTSNEYDAVVPIINGRKQPLLAAYHNRVKEKIYALLQEEKRSMGQLLSQCNVKYIAGEDVQANVDWFINVNTKEEYVQAQKDLSNE.

GTP is bound by residues 9–11 (LAG), K21, D69, and D100. Residue D100 coordinates Mg(2+).

Belongs to the MobA family. It depends on Mg(2+) as a cofactor.

It localises to the cytoplasm. It catalyses the reaction Mo-molybdopterin + GTP + H(+) = Mo-molybdopterin guanine dinucleotide + diphosphate. In terms of biological role, transfers a GMP moiety from GTP to Mo-molybdopterin (Mo-MPT) cofactor (Moco or molybdenum cofactor) to form Mo-molybdopterin guanine dinucleotide (Mo-MGD) cofactor. The chain is Probable molybdenum cofactor guanylyltransferase from Bacillus mycoides (strain KBAB4) (Bacillus weihenstephanensis).